Consider the following 404-residue polypeptide: Multidrug resistance protein MdtG (404 aa).

Transmembrane regions (helical) follow at residues 19–39 (LGCFLTGAAFSLVMPFLPLYV), 56–76 (LVFSITFLFSAIASPFWGGLA), 90–110 (LGMAIVMLLMGMAQNIWQFLI), 113–133 (ALLGLLGGFIPNANALIATQV), 144–164 (TLSTGGVSGALLGPLAGGLLA), 171–191 (PVFFITASVLFICFLLTFFFI), 222–242 (LFVTTLIIQVATGSIAPILTL), 254–274 (IAFISGMIASVPGVAALLSAP), 288–308 (ILIVALIISVLLLIPMSFVQT), 317–337 (FLLGAADGALLPAVQTLLVYN), and 376–396 (AVFCVTAGVVLFNAIYSWNSL).

The protein belongs to the major facilitator superfamily. DHA1 family. MdtG (TC 2.A.1.2.20) subfamily.

The protein localises to the cell inner membrane. This is Multidrug resistance protein MdtG from Salmonella dublin (strain CT_02021853).